The chain runs to 297 residues: Acetylglutamate kinase (297 aa).

Substrate contacts are provided by residues 73 to 74, Arg95, and Asn188; that span reads GG.

It belongs to the acetylglutamate kinase family. ArgB subfamily.

The protein localises to the cytoplasm. It carries out the reaction N-acetyl-L-glutamate + ATP = N-acetyl-L-glutamyl 5-phosphate + ADP. It participates in amino-acid biosynthesis; L-arginine biosynthesis; N(2)-acetyl-L-ornithine from L-glutamate: step 2/4. In terms of biological role, catalyzes the ATP-dependent phosphorylation of N-acetyl-L-glutamate. In Nostoc sp. (strain PCC 7120 / SAG 25.82 / UTEX 2576), this protein is Acetylglutamate kinase.